A 357-amino-acid polypeptide reads, in one-letter code: 3-dehydroquinate synthase (357 aa).

Residues 104 to 108 (GVVGD), 128 to 129 (TT), lysine 141, and 168 to 171 (FLET) each bind NAD(+). Zn(2+) contacts are provided by glutamate 183, histidine 243, and histidine 260.

This sequence belongs to the sugar phosphate cyclases superfamily. Dehydroquinate synthase family. NAD(+) serves as cofactor. The cofactor is Co(2+). Requires Zn(2+) as cofactor.

Its subcellular location is the cytoplasm. It carries out the reaction 7-phospho-2-dehydro-3-deoxy-D-arabino-heptonate = 3-dehydroquinate + phosphate. It participates in metabolic intermediate biosynthesis; chorismate biosynthesis; chorismate from D-erythrose 4-phosphate and phosphoenolpyruvate: step 2/7. In terms of biological role, catalyzes the conversion of 3-deoxy-D-arabino-heptulosonate 7-phosphate (DAHP) to dehydroquinate (DHQ). The protein is 3-dehydroquinate synthase of Streptococcus pyogenes serotype M3 (strain ATCC BAA-595 / MGAS315).